A 230-amino-acid polypeptide reads, in one-letter code: Putative 14-3-3-like protein GF14-H (230 aa).

The protein belongs to the 14-3-3 family.

In terms of biological role, is associated with a DNA binding complex that binds to the G box, a well-characterized cis-acting DNA regulatory element found in plant genes. In Oryza sativa subsp. japonica (Rice), this protein is Putative 14-3-3-like protein GF14-H (GF14H).